Consider the following 146-residue polypeptide: Large ribosomal subunit protein uL11 (146 aa).

The protein belongs to the universal ribosomal protein uL11 family. Part of the ribosomal stalk of the 50S ribosomal subunit. Interacts with L10 and the large rRNA to form the base of the stalk. L10 forms an elongated spine to which L12 dimers bind in a sequential fashion forming a multimeric L10(L12)X complex. Post-translationally, one or more lysine residues are methylated.

Functionally, forms part of the ribosomal stalk which helps the ribosome interact with GTP-bound translation factors. This Salinibacter ruber (strain DSM 13855 / M31) protein is Large ribosomal subunit protein uL11.